A 260-amino-acid chain; its full sequence is Alpha-acetolactate decarboxylase (260 aa).

It belongs to the alpha-acetolactate decarboxylase family.

The catalysed reaction is (2S)-2-acetolactate + H(+) = (R)-acetoin + CO2. The protein operates within polyol metabolism; (R,R)-butane-2,3-diol biosynthesis; (R,R)-butane-2,3-diol from pyruvate: step 2/3. Converts acetolactate into acetoin, which can be excreted by the cells. This may be a mechanism for controlling the internal pH of cells in the stationary stage. The protein is Alpha-acetolactate decarboxylase (budA) of Klebsiella aerogenes (Enterobacter aerogenes).